A 238-amino-acid polypeptide reads, in one-letter code: Ribonuclease PH (238 aa).

Phosphate contacts are provided by residues Arg86 and 124–126; that span reads GTR.

The protein belongs to the RNase PH family. Homohexameric ring arranged as a trimer of dimers.

It carries out the reaction tRNA(n+1) + phosphate = tRNA(n) + a ribonucleoside 5'-diphosphate. Phosphorolytic 3'-5' exoribonuclease that plays an important role in tRNA 3'-end maturation. Removes nucleotide residues following the 3'-CCA terminus of tRNAs; can also add nucleotides to the ends of RNA molecules by using nucleoside diphosphates as substrates, but this may not be physiologically important. Probably plays a role in initiation of 16S rRNA degradation (leading to ribosome degradation) during starvation. This is Ribonuclease PH from Haemophilus influenzae (strain PittGG).